Consider the following 304-residue polypeptide: MDLLTLWNLEREEVLKIIEDAEYFKKNRCGHDILKNKSIALIFESPSTRTRMSFDLAVHELGGHSLMMNEGEIHLGKKESIADTARVMSRFVDAIVARVKSHKTLEDLAEYGSVPVINALCDLAHPCQILADLLTMKENGKDFKGLKLAYFGDGNNVSNSLMIAGAILGMDVVIATPRSYEPSGLFVKKALEIIAKYGEGSLTLTDDPEIAAKDADVLYTDVWISMNDKNKNLEEILKIFPKFQINAELLSKAKEDAIVLHCLPANRGFEITDEVIDGKQSKVFDQAENRLHAQKSVLKYIFEH.

Carbamoyl phosphate-binding positions include 47–50 (STRT), R98, and 125–128 (HPCQ). L-ornithine contacts are provided by residues N156, D221, and 225–226 (SM). Residues 262 to 263 (CL) and R290 contribute to the carbamoyl phosphate site.

Belongs to the aspartate/ornithine carbamoyltransferase superfamily. OTCase family.

It is found in the cytoplasm. It carries out the reaction carbamoyl phosphate + L-ornithine = L-citrulline + phosphate + H(+). It participates in amino-acid biosynthesis; L-arginine biosynthesis; L-arginine from L-ornithine and carbamoyl phosphate: step 1/3. Its function is as follows. Reversibly catalyzes the transfer of the carbamoyl group from carbamoyl phosphate (CP) to the N(epsilon) atom of ornithine (ORN) to produce L-citrulline. This Methanococcus maripaludis (strain C5 / ATCC BAA-1333) protein is Ornithine carbamoyltransferase.